Consider the following 635-residue polypeptide: Chaperone protein HtpG (635 aa).

Residues 1–346 (MSQTTTTSAS…SADLPLNVSR (346 aa)) are a; substrate-binding. The tract at residues 347–563 (EILQESRDVR…QNELSPHLLR (217 aa)) is b. Residues 564–635 (MLKAAGQEAP…KRLNGLLLKA (72 aa)) form a c region.

It belongs to the heat shock protein 90 family. In terms of assembly, homodimer.

Its subcellular location is the cytoplasm. Molecular chaperone. Has ATPase activity. This is Chaperone protein HtpG from Bordetella pertussis (strain Tohama I / ATCC BAA-589 / NCTC 13251).